Reading from the N-terminus, the 213-residue chain is Flagellar transcriptional regulator FlhC (213 aa).

4 residues coordinate Zn(2+): C138, C141, C158, and C161.

Belongs to the FlhC family. As to quaternary structure, heterohexamer composed of two FlhC and four FlhD subunits. Each FlhC binds a FlhD dimer, forming a heterotrimer, and a hexamer assembles by dimerization of two heterotrimers. Requires Zn(2+) as cofactor.

The protein resides in the cytoplasm. Its function is as follows. Functions in complex with FlhD as a master transcriptional regulator that regulates transcription of several flagellar and non-flagellar operons by binding to their promoter region. Activates expression of class 2 flagellar genes, including fliA, which is a flagellum-specific sigma factor that turns on the class 3 genes. Also regulates genes whose products function in a variety of physiological pathways. In Cupriavidus metallidurans (strain ATCC 43123 / DSM 2839 / NBRC 102507 / CH34) (Ralstonia metallidurans), this protein is Flagellar transcriptional regulator FlhC.